Here is a 210-residue protein sequence, read N- to C-terminus: SAP domain-containing ribonucleoprotein (210 aa).

A2 is subject to N-acetylalanine. The SAP domain occupies 8 to 42 (LHKLKLAELKQECLARGLETKGIKQDLINRLQAYL). An N6-acetyllysine modification is found at K10. A compositionally biased stretch (acidic residues) spans 45-64 (HAEEEANEEDVLGDETEEEE). A disordered region spans residues 45-87 (HAEEEANEEDVLGDETEEEEPKPIELPVKEEEPPEKVVDMASE). Over residues 65–87 (PKPIELPVKEEEPPEKVVDMASE) the composition is skewed to basic and acidic residues. The residue at position 142 (K142) is an N6-acetyllysine. Residues 161-210 (VSSISRKSEDDEKLKKRKERFGIVTSSAGTGTTEDTEAKKRKRAERFGIA) form a disordered region. S163 is modified (phosphoserine). The span at 184 to 193 (VTSSAGTGTT) shows a compositional bias: polar residues.

Belongs to the SAP domain-containing ribonucleoprotein family. In terms of assembly, interacts with DDX39A. Interacts with FUS. Interacts (via the C-terminal domain) with DDX39B; the interaction is direct and facilitates RNA binding of DDX39B. Component of the transcription/export (TREX) complex at least composed of ALYREF/THOC4, DDX39B, SARNP/CIP29, CHTOP and the THO subcomplex; TREX seems to have dynamic structure involving ATP-dependent remodeling; in the complex interacts directly with DDX39B in a ATP-dependent manner which bridges it to ALYREF/THOC4.

It is found in the nucleus. The protein resides in the nucleus speckle. In terms of biological role, binds both single-stranded and double-stranded DNA with higher affinity for the single-stranded form. Specifically binds to scaffold/matrix attachment region DNA. Also binds single-stranded RNA. Enhances RNA unwinding activity of DDX39A. May participate in important transcriptional or translational control of cell growth, metabolism and carcinogenesis. Component of the TREX complex which is thought to couple mRNA transcription, processing and nuclear export, and specifically associates with spliced mRNA and not with unspliced pre-mRNA. The TREX complex is recruited to spliced mRNAs by a transcription-independent mechanism, binds to mRNA upstream of the exon-junction complex (EJC) and is recruited in a splicing- and cap-dependent manner to a region near the 5' end of the mRNA where it functions in mRNA export to the cytoplasm via the TAP/NXF1 pathway. Associates with DDX39B, which facilitates RNA binding of DDX39B and likely plays a role in mRNA export. The protein is SAP domain-containing ribonucleoprotein (Sarnp) of Rattus norvegicus (Rat).